Here is a 123-residue protein sequence, read N- to C-terminus: Small ribosomal subunit protein bS16 (123 aa).

A disordered region spans residues 86 to 123 (PVRAEQTKQPQPKAKAQQRAKDQAERDAAAAAEAAAGE). Residues 93–102 (KQPQPKAKAQ) show a composition bias toward low complexity. Basic and acidic residues predominate over residues 104–113 (RAKDQAERDA). Residues 114 to 123 (AAAAEAAAGE) show a composition bias toward low complexity.

This sequence belongs to the bacterial ribosomal protein bS16 family.

In Paramagnetospirillum magneticum (strain ATCC 700264 / AMB-1) (Magnetospirillum magneticum), this protein is Small ribosomal subunit protein bS16.